The chain runs to 359 residues: DNA integrity scanning protein DisA (359 aa).

Positions 7-146 constitute a DAC domain; that stretch reads DEVLRQTLAI…NRRYVLEGSD (140 aa). Residues G74, L92, and 105-109 each bind ATP; that span reads TRHRT.

It belongs to the DisA family. As to quaternary structure, homooctamer. Mg(2+) serves as cofactor.

It catalyses the reaction 2 ATP = 3',3'-c-di-AMP + 2 diphosphate. Its function is as follows. Participates in a DNA-damage check-point. DisA forms globular foci that rapidly scan along the chromosomes searching for lesions. Functionally, also has diadenylate cyclase activity, catalyzing the condensation of 2 ATP molecules into cyclic di-AMP (c-di-AMP). c-di-AMP likely acts as a signaling molecule that may couple DNA integrity with a cellular process. The chain is DNA integrity scanning protein DisA from Kineococcus radiotolerans (strain ATCC BAA-149 / DSM 14245 / SRS30216).